Reading from the N-terminus, the 690-residue chain is eEF1A lysine and N-terminal methyltransferase (690 aa).

The disordered stretch occupies residues 427 to 451 (AAASSASKKKNKKKAKQPASTGAKD). Over residues 433-442 (SKKKNKKKAK) the composition is skewed to basic residues.

The protein belongs to the methyltransferase superfamily.

The enzyme catalyses L-lysyl-[protein] + S-adenosyl-L-methionine = N(6)-methyl-L-lysyl-[protein] + S-adenosyl-L-homocysteine + H(+). It carries out the reaction N(6)-methyl-L-lysyl-[protein] + S-adenosyl-L-methionine = N(6),N(6)-dimethyl-L-lysyl-[protein] + S-adenosyl-L-homocysteine + H(+). The catalysed reaction is N-terminal glycyl-L-lysyl-L-glutamyl-[protein] + 3 S-adenosyl-L-methionine = N-terminal N,N,N-trimethyl-glycyl-L-lysyl-L-glutamyl-[protein] + 3 S-adenosyl-L-homocysteine + 3 H(+). Its function is as follows. Dual methyltransferase that catalyzes methylation of elongation factor 1-alpha (eef1a1 and eef1a2) at two different positions, and is therefore involved in the regulation of mRNA translation. Via its C-terminus, methylates the N-terminus of eef1a1 and eef1a2. Via its N-terminus dimethylates lysine residues of eef1a1 and eef1a2. The chain is eEF1A lysine and N-terminal methyltransferase (mettl13) from Danio rerio (Zebrafish).